The sequence spans 177 residues: Alpha-crystallin B chain (177 aa).

The residue at position 1 (M1) is an N-acetylmethionine. The sHSP domain occupies 58 to 166 (RMPSWAQTGL…PERSVPISRD (109 aa)). Zn(2+) contacts are provided by H85, H106, E108, H113, and H121. Positions 155 to 169 (DVPERSVPISRDEKP) are enriched in basic and acidic residues. Residues 155–177 (DVPERSVPISRDEKPAVAGPQQK) are disordered.

Belongs to the small heat shock protein (HSP20) family. As to quaternary structure, heteromer composed of three CRYAA and one CRYAB subunits. Aggregates with homologous proteins, including the small heat shock protein HSPB1, to form large heteromeric complexes. Inter-subunit bridging via zinc ions enhances stability, which is crucial as there is no protein turn over in the lens. Interacts with HSPBAP1 and TTN/titin.

May contribute to the transparency and refractive index of the lens. The sequence is that of Alpha-crystallin B chain (CRYAB) from Squalus acanthias (Spiny dogfish).